Consider the following 824-residue polypeptide: Cell division cycle protein 27 homolog (824 aa).

TPR repeat units lie at residues 6-35 (EPVQAAIWQALNHYAYRDAVFLAERLYAEV), 38-65 (EEALFLLATCYYRSGKAYKAYRLLKGHS), 67-99 (TTPQCKYLLAKCCVDLSKLAEGEQILSGGVFNK), and 115-145 (CFTLSLLGHVYCKTDRLAKGSECYQKSLSLN). 3 positions are modified to phosphothreonine: threonine 205, threonine 209, and threonine 244. The interval 287-422 (LETPSPGDGS…TNKGGITQPN (136 aa)) is disordered. Serine 291 carries the phosphoserine modification. At threonine 313 the chain carries Phosphothreonine. Polar residues predominate over residues 326–341 (QTGTKSVFSQSGNSRE). A Phosphoserine modification is found at serine 339. Over residues 348-361 (QTQSSGPQTSTTPQ) the composition is skewed to low complexity. Residues 362–371 (VLSPTITSPP) show a composition bias toward polar residues. Residue threonine 366 is modified to Phosphothreonine. Serine 379 and serine 386 each carry phosphoserine. A compositionally biased stretch (polar residues) spans 380–390 (RLFTSDSSTTK). Basic residues predominate over residues 395 to 413 (KLKMKFPPKIPNRKTKSKT). The residue at position 426 (serine 426) is a Phosphoserine. Threonine 430 is modified (phosphothreonine). Serine 435 and serine 438 each carry phosphoserine. Residue threonine 446 is modified to Phosphothreonine. TPR repeat units follow at residues 465-495 (LLREMGKGYLALCSYNCKEAINILSHLPSHH), 499-528 (GWVLCQIGRAYFELSEYMQAERIFSEVRRI), 533-563 (VEGMEIYSTTLWHLQKDVALSVLSKDLTDMD), 567-598 (PEAWCAAGNCFSLQREHDIAIKFFQRAIQVDP), 601-631 (AYAYTLLGHEFVLTEELDKALACFRNAIRVN), 635-667 (YNAWYGLGMIYYKQEKFSLAEMHFQKALDINPQ), 670-702 (VLLCHIGVVQHALKKSEKALDTLNKAIVIDPKN), 704-734 (LCKFHRASVLFANEKYKSALQELEELKQIVP), and 737-768 (SLVYFLIGKVYKKLGQTHLALMNFSWAMDLDP). Positions 781–824 (KRYLPDDEEPITQEEQIMGTDESQESSMTDADDTQLHAAESDEF) are disordered. At serine 821 the chain carries Phosphoserine.

This sequence belongs to the APC3/CDC27 family. As to quaternary structure, homodimer. The mammalian APC/C is composed at least of 14 distinct subunits ANAPC1, ANAPC2, CDC27/APC3, ANAPC4, ANAPC5, CDC16/APC6, ANAPC7, CDC23/APC8, ANAPC10, ANAPC11, CDC26/APC12, ANAPC13, ANAPC15 and ANAPC16 that assemble into a complex of at least 19 chains with a combined molecular mass of around 1.2 MDa; APC/C interacts with FZR1 and FBXO5. Interacts with RB. Interacts with FAM168B/MANI. Interacts with MCPH1. Phosphorylated. Phosphorylation on Ser-426 and Thr-446 occurs specifically during mitosis.

It is found in the nucleus. Its subcellular location is the cytoplasm. The protein resides in the cytoskeleton. It localises to the spindle. It functions in the pathway protein modification; protein ubiquitination. Its function is as follows. Component of the anaphase promoting complex/cyclosome (APC/C), a cell cycle-regulated E3 ubiquitin ligase that controls progression through mitosis and the G1 phase of the cell cycle. The APC/C complex acts by mediating ubiquitination and subsequent degradation of target proteins: it mainly mediates the formation of 'Lys-11'-linked polyubiquitin chains and, to a lower extent, the formation of 'Lys-48'- and 'Lys-63'-linked polyubiquitin chains. The APC/C complex catalyzes assembly of branched 'Lys-11'-/'Lys-48'-linked branched ubiquitin chains on target proteins. This Homo sapiens (Human) protein is Cell division cycle protein 27 homolog (CDC27).